A 420-amino-acid chain; its full sequence is Serine hydroxymethyltransferase (420 aa).

(6S)-5,6,7,8-tetrahydrofolate contacts are provided by residues Leu121 and 125–127; that span reads GHL. An N6-(pyridoxal phosphate)lysine modification is found at Lys230. (6S)-5,6,7,8-tetrahydrofolate-binding positions include Glu246 and 354-356; that span reads SPF.

It belongs to the SHMT family. In terms of assembly, homodimer. Requires pyridoxal 5'-phosphate as cofactor.

The protein resides in the cytoplasm. The catalysed reaction is (6R)-5,10-methylene-5,6,7,8-tetrahydrofolate + glycine + H2O = (6S)-5,6,7,8-tetrahydrofolate + L-serine. It participates in one-carbon metabolism; tetrahydrofolate interconversion. It functions in the pathway amino-acid biosynthesis; glycine biosynthesis; glycine from L-serine: step 1/1. In terms of biological role, catalyzes the reversible interconversion of serine and glycine with tetrahydrofolate (THF) serving as the one-carbon carrier. This reaction serves as the major source of one-carbon groups required for the biosynthesis of purines, thymidylate, methionine, and other important biomolecules. Also exhibits THF-independent aldolase activity toward beta-hydroxyamino acids, producing glycine and aldehydes, via a retro-aldol mechanism. In Rickettsia massiliae (strain Mtu5), this protein is Serine hydroxymethyltransferase.